The following is a 1299-amino-acid chain: Tenascin-N (1299 aa).

The first 28 residues, 1–28, serve as a signal peptide directing secretion; it reads MSLQEMFRFPMGLLLGSVLLVASAPATL. EGF-like domains are found at residues 167-198, 199-229, and 230-260; these read ERLACPGACSGHGRCVDGRCLCHEPYVGADCG, YPACPENCSGHGECVRGVCQCHEDFMSEDCS, and EKRCPGDCSGHGFCDTGECYCEEGFTGLDCA. 9 disulfides stabilise this stretch: C171/C181, C175/C186, C188/C197, C202/C212, C206/C217, C219/C228, C233/C243, C237/C248, and C250/C259. Fibronectin type-III domains are found at residues 264-352, 353-444, 445-532, 533-623, 624-709, 710-800, 801-886, 887-976, and 977-1063; these read TPQG…TDLA, VLGT…TEID, SPTN…TEID, SPAN…IDSP, KNLV…TDID, SPQN…IDSP, QNLV…TEID, GPKN…LDPP, and RNLR…VGAR. Residues 605–624 form a disordered region; sequence GDRESKKADTNAPTDIDSPK. Basic and acidic residues predominate over residues 960–977; the sequence is QESKKADTKAQTELDPPR. Residues 960-982 form a disordered region; the sequence is QESKKADTKAQTELDPPRNLRPS. The region spanning 1061–1278 is the Fibrinogen C-terminal domain; it reads GARFPHPSDC…YVELKIRPHG (218 aa). N1149 is a glycosylation site (N-linked (GlcNAc...) asparagine).

This sequence belongs to the tenascin family. In terms of assembly, homohexamer. As to expression, not detected in normal adult mammary tissues or brain but expressed in most breast tumors and brain tumors, such as glioblastomas, astrocytomas and oligodendrogliomas, tested. In brain tumors, detected around the endothelial cell layer of the clood vessels.

The protein localises to the secreted. Its subcellular location is the extracellular space. It is found in the extracellular matrix. Extracellular matrix protein that seems to be a ligand for ITGA8:ITGB1, ITGAV:ITGB1 and ITGA4:ITGB1. Involved in neurite outgrowth and cell migration in hippocampal explants. During endochondral bone formation, inhibits proliferation and differentiation of proteoblasts mediated by canonical WNT signaling. In tumors, stimulates angiogenesis by elongation, migration and sprouting of endothelial cells. Expressed in most mammary tumors, may facilitate tumorigenesis by supporting the migratory behavior of breast cancer cells. The protein is Tenascin-N of Homo sapiens (Human).